A 97-amino-acid chain; its full sequence is Citrate lyase acyl carrier protein (97 aa).

At S14 the chain carries O-(phosphoribosyl dephospho-coenzyme A)serine.

The protein belongs to the CitD family. In terms of assembly, oligomer with a subunit composition of (alpha,beta,gamma)6.

It is found in the cytoplasm. In terms of biological role, covalent carrier of the coenzyme of citrate lyase. The polypeptide is Citrate lyase acyl carrier protein (Rhodopseudomonas palustris (strain BisA53)).